A 238-amino-acid polypeptide reads, in one-letter code: Ribitol-5-phosphate cytidylyltransferase 2 (238 aa).

CTP contacts are provided by residues 7–10 (LAGG) and 81–87 (GTDRNET).

Belongs to the IspD/TarI cytidylyltransferase family. TarI subfamily. In terms of assembly, heterodimer together with TarJ.

The catalysed reaction is D-ribitol 5-phosphate + CTP + H(+) = CDP-L-ribitol + diphosphate. The protein operates within cell wall biogenesis; poly(ribitol phosphate) teichoic acid biosynthesis. Functionally, catalyzes the transfer of the cytidylyl group of CTP to D-ribitol 5-phosphate. This is Ribitol-5-phosphate cytidylyltransferase 2 from Staphylococcus aureus (strain NCTC 8325 / PS 47).